The sequence spans 180 residues: ADP-ribosylation factor-like protein 1 (180 aa).

Glycine 2 carries N-myristoyl glycine lipidation. Residues 23–30 (GLDGAGKT), 66–70 (DLGGQ), and 125–128 (NKQD) contribute to the GTP site.

Belongs to the small GTPase superfamily. Arf family. In terms of tissue distribution, expressed in neuronal cells. Expression in hypodermal tissues is absent.

It localises to the golgi apparatus. Its subcellular location is the cytoplasm. The protein localises to the cytoplasmic granule. In terms of biological role, GTP-binding protein that may be involved in protein trafficking; may modulate vesicle budding and uncoating within the Golgi apparatus. Plays a role in male tail tip morphogenesis. In Caenorhabditis elegans, this protein is ADP-ribosylation factor-like protein 1.